The sequence spans 509 residues: tRNA (guanine(37)-N(1))-methyltransferase (509 aa).

A mitochondrion-targeting transit peptide spans 1–57 (MVLWILWRPFGFSRRLLKLERHSITESKSLIPLAWTSLTQTLSESPGIFLLGQRKRF). Residues His-289, 327-328 (DL), 355-356 (DG), and Asn-387 each bind S-adenosyl-L-methionine. Positions 478 to 509 (TKNPENHEDPPLKRQRTAEAFSDEKTQIASNT) are disordered.

The protein belongs to the class I-like SAM-binding methyltransferase superfamily. TRM5/TYW2 family. Monomer.

It localises to the mitochondrion matrix. It is found in the nucleus. Its subcellular location is the cytoplasm. It carries out the reaction guanosine(37) in tRNA + S-adenosyl-L-methionine = N(1)-methylguanosine(37) in tRNA + S-adenosyl-L-homocysteine + H(+). Functionally, involved in mitochondrial tRNA methylation. Specifically methylates the N1 position of guanosine-37 in various tRNAs. Methylation is not dependent on the nature of the nucleoside 5' of the target nucleoside. This is the first step in the biosynthesis of wybutosine (yW), a modified base adjacent to the anticodon of tRNAs and required for accurate decoding. The polypeptide is tRNA (guanine(37)-N(1))-methyltransferase (Macaca fascicularis (Crab-eating macaque)).